A 102-amino-acid polypeptide reads, in one-letter code: Large ribosomal subunit protein bL21 (102 aa).

This sequence belongs to the bacterial ribosomal protein bL21 family. As to quaternary structure, part of the 50S ribosomal subunit. Contacts protein L20.

Functionally, this protein binds to 23S rRNA in the presence of protein L20. This Listeria monocytogenes serotype 4b (strain CLIP80459) protein is Large ribosomal subunit protein bL21.